The primary structure comprises 519 residues: MFAQPYDHSFNDLFNQYVNMETSAADGKDSALSDFDQLFPLDSLSSDCGDLPPTVSTPKRHQSPQPWSNDWSLQNDGAAVDHFAFHDTVHPSAISDVNLNNFEVPSRPTATHALSTSPSTPPATPRRKPTQSALITPKSIRHRSPNERRSHLRKQSFSPSLMRSSNLSKSRMAYPEAWAQQIQNFSLHSSEDRLPLSPPPSDVLIQHENMPTEHIMNQPRDSAEMPPQYDARLYHQSPSVSCHRRTSQCQHASNSTTLITKLFHLDSSSPSSADDMFSSSHSSDPHSISSWQSDPLHASSLSFTPDLQGQDSQWWSPMPSRVAQQQASYLESPTPVRTTQNVGNQNDIMQGGLMIQFNPSYDMSADHSFSSSNMLPATPQKFDTSFTTSQIHNVSRSPSLSPKAGTSPRDIHNGSISKPTHRRTHSRKLSGQSMNAPKPAKASGSSSRGSNKSVSVSFVNFTAHDSKKILTGVAPSGSSKTKARREQEARDRRRKLSEAALRAVRSAGGDVEALEAVLC.

6 disordered regions span residues 105–165, 270–294, 301–320, 325–344, 389–452, and 470–495; these read PSRP…MRSS, PSSADDMFSSSHSSDPHSISSWQSD, LSFTPDLQGQDSQWWSPMPS, QQASYLESPTPVRTTQNVGN, SQIH…GSNK, and LTGVAPSGSSKTKARREQEARDRRRK. Residues 108–118 are compositionally biased toward low complexity; the sequence is PTATHALSTSP. Residues 155 to 165 are compositionally biased toward polar residues; it reads QSFSPSLMRSS. Residues 301–315 are compositionally biased toward polar residues; it reads LSFTPDLQGQDSQWW. Polar residues predominate over residues 389 to 400; sequence SQIHNVSRSPSL. The segment covering 419-428 has biased composition (basic residues); that stretch reads PTHRRTHSRK. The span at 435-452 shows a compositional bias: low complexity; sequence NAPKPAKASGSSSRGSNK.

Belongs to the wetA family.

Its function is as follows. BrlA, abaA and wetA are pivotal regulators of conidiophore development and conidium maturation. They act individually and together to regulate their own expression and that of numerous other sporulation-specific genes. This Penicillium camembertii protein is Developmental regulatory protein wetA.